We begin with the raw amino-acid sequence, 199 residues long: NAD(P)H dehydrogenase (quinone) (199 aa).

In terms of domain architecture, Flavodoxin-like spans 4–190; that stretch reads MLVLYYSAYG…DDARFQGRRV (187 aa). Residues 10–15 and 78–80 each bind FMN; these read SAYGHM and TRY. NAD(+) is bound at residue Tyr12. Trp98 serves as a coordination point for substrate. FMN-binding positions include 113 to 119 and His134; that span reads STATQHG. The disordered stretch occupies residues 158-181; the sequence is GAPYGMTTTADGDGSRQPSAQELD. The segment covering 163–177 has biased composition (polar residues); sequence MTTTADGDGSRQPSA.

It belongs to the WrbA family. Requires FMN as cofactor.

It catalyses the reaction a quinone + NADH + H(+) = a quinol + NAD(+). The catalysed reaction is a quinone + NADPH + H(+) = a quinol + NADP(+). This Brucella ovis (strain ATCC 25840 / 63/290 / NCTC 10512) protein is NAD(P)H dehydrogenase (quinone).